The primary structure comprises 364 residues: Methylenetetrahydrofolate--tRNA-(uracil-5-)-methyltransferase TrmFO (364 aa).

11–16 (GAGLAG) serves as a coordination point for FAD. Residues 335–352 (SYLNQPCSSANDPTSSLL) are compositionally biased toward polar residues. Positions 335–364 (SYLNQPCSSANDPTSSLLDRSPAQRDIPLQ) are disordered.

This sequence belongs to the MnmG family. TrmFO subfamily. Requires FAD as cofactor.

Its subcellular location is the cytoplasm. The catalysed reaction is uridine(54) in tRNA + (6R)-5,10-methylene-5,6,7,8-tetrahydrofolate + NADH + H(+) = 5-methyluridine(54) in tRNA + (6S)-5,6,7,8-tetrahydrofolate + NAD(+). It carries out the reaction uridine(54) in tRNA + (6R)-5,10-methylene-5,6,7,8-tetrahydrofolate + NADPH + H(+) = 5-methyluridine(54) in tRNA + (6S)-5,6,7,8-tetrahydrofolate + NADP(+). Catalyzes the folate-dependent formation of 5-methyl-uridine at position 54 (M-5-U54) in all tRNAs. This is Methylenetetrahydrofolate--tRNA-(uracil-5-)-methyltransferase TrmFO from Prochlorococcus marinus (strain MIT 9313).